Consider the following 393-residue polypeptide: Fructose-bisphosphate aldolase 4, cytosolic (393 aa).

R73 is a substrate binding site. At C207 the chain carries S-glutathionyl cysteine; transient; alternate. Residue C207 is modified to S-nitrosocysteine; transient; alternate. Catalysis depends on E217, which acts as the Proton acceptor. The Schiff-base intermediate with dihydroxyacetone-P role is filled by K259. Residues 301 to 303 (SGG) and R333 each bind substrate.

This sequence belongs to the class I fructose-bisphosphate aldolase family. In terms of assembly, homotetramer. Post-translationally, S-glutathionylated at Cys-207. S-nitrosylated at Cys-207. As to expression, highly expressed in flowers.

The protein localises to the cytoplasm. It is found in the cytosol. It carries out the reaction beta-D-fructose 1,6-bisphosphate = D-glyceraldehyde 3-phosphate + dihydroxyacetone phosphate. It functions in the pathway carbohydrate degradation; glycolysis; D-glyceraldehyde 3-phosphate and glycerone phosphate from D-glucose: step 4/4. Functionally, fructose-bisphosphate aldolase that plays a key role in glycolysis and gluconeogenesis. The protein is Fructose-bisphosphate aldolase 4, cytosolic of Arabidopsis thaliana (Mouse-ear cress).